Reading from the N-terminus, the 72-residue chain is Crustacean hyperglycemic hormone (72 aa).

3 cysteine pairs are disulfide-bonded: Cys7-Cys43, Cys23-Cys39, and Cys26-Cys52. Val72 bears the Valine amide mark.

It is found in the secreted. Functionally, hormone found in the sinus gland of isopods and decapods which controls the blood sugar level. Has a secretagogue action over the amylase released from the midgut gland. May act as a stress hormone and may be involved in the control of molting and reproduction. In Penaeus schmitti (White shrimp), this protein is Crustacean hyperglycemic hormone.